The primary structure comprises 74 residues: Benzylsuccinate synthase beta subunit (74 aa).

As to quaternary structure, heterohexamer composed of 2 alpha subunits, 2 beta subunits and 2 gamma subunits.

The catalysed reaction is toluene + fumarate = 2-benzylsuccinate. It functions in the pathway xenobiotic degradation; toluene degradation. With respect to regulation, activated by the benzylsuccinate synthase activating enzyme BssD. Rapidly inactivated by oxygen. In terms of biological role, catalyzes the addition of fumarate to the methyl group of toluene, leading to the formation of benzylsuccinate. The chain is Benzylsuccinate synthase beta subunit (bssB) from Thauera aromatica.